A 425-amino-acid polypeptide reads, in one-letter code: Trigger factor (425 aa).

The PPIase FKBP-type domain occupies Gly163 to Pro248.

Belongs to the FKBP-type PPIase family. Tig subfamily.

It localises to the cytoplasm. It catalyses the reaction [protein]-peptidylproline (omega=180) = [protein]-peptidylproline (omega=0). In terms of biological role, involved in protein export. Acts as a chaperone by maintaining the newly synthesized protein in an open conformation. Functions as a peptidyl-prolyl cis-trans isomerase. The protein is Trigger factor of Bacillus cereus (strain ATCC 10987 / NRS 248).